Consider the following 238-residue polypeptide: Pyridoxine 5'-phosphate synthase (238 aa).

Asn7 contacts 3-amino-2-oxopropyl phosphate. 9–10 (DH) serves as a coordination point for 1-deoxy-D-xylulose 5-phosphate. Arg18 is a binding site for 3-amino-2-oxopropyl phosphate. The active-site Proton acceptor is His43. Arg45 and His50 together coordinate 1-deoxy-D-xylulose 5-phosphate. The active-site Proton acceptor is Glu70. Residue Thr100 participates in 1-deoxy-D-xylulose 5-phosphate binding. His191 (proton donor) is an active-site residue. 3-amino-2-oxopropyl phosphate is bound by residues Gly192 and 213-214 (GH).

Belongs to the PNP synthase family. Homooctamer; tetramer of dimers.

The protein resides in the cytoplasm. The catalysed reaction is 3-amino-2-oxopropyl phosphate + 1-deoxy-D-xylulose 5-phosphate = pyridoxine 5'-phosphate + phosphate + 2 H2O + H(+). The protein operates within cofactor biosynthesis; pyridoxine 5'-phosphate biosynthesis; pyridoxine 5'-phosphate from D-erythrose 4-phosphate: step 5/5. Catalyzes the complicated ring closure reaction between the two acyclic compounds 1-deoxy-D-xylulose-5-phosphate (DXP) and 3-amino-2-oxopropyl phosphate (1-amino-acetone-3-phosphate or AAP) to form pyridoxine 5'-phosphate (PNP) and inorganic phosphate. The chain is Pyridoxine 5'-phosphate synthase from Thermosynechococcus vestitus (strain NIES-2133 / IAM M-273 / BP-1).